The following is a 460-amino-acid chain: EPD1-interacting receptor-like cytoplasmic serine/threonine-protein kinase 5D (460 aa).

One can recognise a Protein kinase domain in the interval 83-364 (FSSANFLGEG…DVVNILEPLL (282 aa)). Residues 89-97 (LGEGGFGPV) and lysine 118 each bind ATP. 2 positions are modified to phosphotyrosine: tyrosine 163 and tyrosine 165. The active-site Proton acceptor is aspartate 213.

Belongs to the protein kinase superfamily. Ser/Thr protein kinase family. In terms of assembly, interacts with the V.dahliae elicitor EPD1 (AC G2WWH6). In terms of processing, phosphorylated at Tyr-163 and Tyr-165 in the presence of pathogen-associated molecular patterns (PAMPs); this triggers the expression of pathogenesis-related genes. Mostly expressed in roots and, to a lesser extent, in leaves.

It is found in the cell membrane. It catalyses the reaction L-seryl-[protein] + ATP = O-phospho-L-seryl-[protein] + ADP + H(+). The catalysed reaction is L-threonyl-[protein] + ATP = O-phospho-L-threonyl-[protein] + ADP + H(+). Functionally, required for pathogen-associated molecular pattern (PAMP, e.g. chitin and flg22)-triggered immunity (PTI) involving reactive oxygen species (ROS) accumulation and triggering plant defense, including defense-related gene expression (e.g. PR1 and LOX). Ensures specific recognition of the EPD1 effector of Verticillium dahliae, resulting in a hypersensitive response known as effector-triggered immunity (ETI), characterized by the activation of programmed cell death to limit infection by the pathogen. Priming plants with the incompatible pathogen V.dahliae leads to an increased resistance to compatible pathogens, as a result of systemic acquired resistance (SAR). The sequence is that of EPD1-interacting receptor-like cytoplasmic serine/threonine-protein kinase 5D from Gossypium barbadense (Sea Island cotton).